The chain runs to 438 residues: 3-phosphoshikimate 1-carboxyvinyltransferase (438 aa).

Lys-21, Ser-22, and Arg-26 together coordinate 3-phosphoshikimate. Lys-21 provides a ligand contact to phosphoenolpyruvate. The phosphoenolpyruvate site is built by Gly-95 and Arg-123. 3-phosphoshikimate-binding residues include Ser-167, Gln-169, Asp-315, and Lys-342. Gln-169 contacts phosphoenolpyruvate. Asp-315 (proton acceptor) is an active-site residue. 2 residues coordinate phosphoenolpyruvate: Arg-346 and Arg-387.

It belongs to the EPSP synthase family. As to quaternary structure, monomer.

Its subcellular location is the cytoplasm. The catalysed reaction is 3-phosphoshikimate + phosphoenolpyruvate = 5-O-(1-carboxyvinyl)-3-phosphoshikimate + phosphate. The protein operates within metabolic intermediate biosynthesis; chorismate biosynthesis; chorismate from D-erythrose 4-phosphate and phosphoenolpyruvate: step 6/7. Functionally, catalyzes the transfer of the enolpyruvyl moiety of phosphoenolpyruvate (PEP) to the 5-hydroxyl of shikimate-3-phosphate (S3P) to produce enolpyruvyl shikimate-3-phosphate and inorganic phosphate. This chain is 3-phosphoshikimate 1-carboxyvinyltransferase, found in Coxiella burnetii (strain CbuG_Q212) (Coxiella burnetii (strain Q212)).